We begin with the raw amino-acid sequence, 209 residues long: Kynurenine formamidase (209 aa).

Tryptophan 20 serves as a coordination point for substrate. Zn(2+) is bound by residues histidine 50, histidine 54, and aspartate 56. Residue histidine 60 is the Proton donor/acceptor of the active site. Zn(2+)-binding residues include histidine 161 and glutamate 173.

This sequence belongs to the Cyclase 1 superfamily. KynB family. In terms of assembly, homodimer. The cofactor is Zn(2+).

It catalyses the reaction N-formyl-L-kynurenine + H2O = L-kynurenine + formate + H(+). The protein operates within amino-acid degradation; L-tryptophan degradation via kynurenine pathway; L-kynurenine from L-tryptophan: step 2/2. In terms of biological role, catalyzes the hydrolysis of N-formyl-L-kynurenine to L-kynurenine, the second step in the kynurenine pathway of tryptophan degradation. This chain is Kynurenine formamidase, found in Bacillus cereus (strain ZK / E33L).